The sequence spans 194 residues: uncharacterized protein (194 aa).

The protein belongs to the mimivirus R457/R459 family.

Its subcellular location is the virion. This is an uncharacterized protein from Acanthamoeba polyphaga mimivirus (APMV).